Consider the following 255-residue polypeptide: Thiazole synthase (255 aa).

Lys-96 acts as the Schiff-base intermediate with DXP in catalysis. Residues Gly-157, 183-184 (AG), and 205-206 (NS) contribute to the 1-deoxy-D-xylulose 5-phosphate site.

The protein belongs to the ThiG family. Homotetramer. Forms heterodimers with either ThiH or ThiS.

Its subcellular location is the cytoplasm. It catalyses the reaction [ThiS sulfur-carrier protein]-C-terminal-Gly-aminoethanethioate + 2-iminoacetate + 1-deoxy-D-xylulose 5-phosphate = [ThiS sulfur-carrier protein]-C-terminal Gly-Gly + 2-[(2R,5Z)-2-carboxy-4-methylthiazol-5(2H)-ylidene]ethyl phosphate + 2 H2O + H(+). The protein operates within cofactor biosynthesis; thiamine diphosphate biosynthesis. In terms of biological role, catalyzes the rearrangement of 1-deoxy-D-xylulose 5-phosphate (DXP) to produce the thiazole phosphate moiety of thiamine. Sulfur is provided by the thiocarboxylate moiety of the carrier protein ThiS. In vitro, sulfur can be provided by H(2)S. The sequence is that of Thiazole synthase from Exiguobacterium sibiricum (strain DSM 17290 / CCUG 55495 / CIP 109462 / JCM 13490 / 255-15).